Here is a 351-residue protein sequence, read N- to C-terminus: Glycerol-3-phosphate dehydrogenase [NAD(P)+] (351 aa).

S18, W19, R38, and K122 together coordinate NADPH. Residues K122, G153, and S155 each coordinate sn-glycerol 3-phosphate. A157 lines the NADPH pocket. Sn-glycerol 3-phosphate-binding residues include K208, D261, S271, R272, and N273. Catalysis depends on K208, which acts as the Proton acceptor. An NADPH-binding site is contributed by R272. NADPH is bound at residue E297.

This sequence belongs to the NAD-dependent glycerol-3-phosphate dehydrogenase family.

The protein resides in the cytoplasm. It catalyses the reaction sn-glycerol 3-phosphate + NAD(+) = dihydroxyacetone phosphate + NADH + H(+). The enzyme catalyses sn-glycerol 3-phosphate + NADP(+) = dihydroxyacetone phosphate + NADPH + H(+). It participates in membrane lipid metabolism; glycerophospholipid metabolism. In terms of biological role, catalyzes the reduction of the glycolytic intermediate dihydroxyacetone phosphate (DHAP) to sn-glycerol 3-phosphate (G3P), the key precursor for phospholipid synthesis. The protein is Glycerol-3-phosphate dehydrogenase [NAD(P)+] of Bordetella parapertussis (strain 12822 / ATCC BAA-587 / NCTC 13253).